A 331-amino-acid chain; its full sequence is N-arachidonyl glycine receptor (331 aa).

Residues 1–26 (MAIPSNRDQLALSNGSHPEEYKIAAL) are Extracellular-facing. N14 carries N-linked (GlcNAc...) asparagine glycosylation. The chain crosses the membrane as a helical span at residues 27-47 (VFYSCIFLIGLLVNVTALWVF). The Cytoplasmic portion of the chain corresponds to 48–56 (SCTTKKRTT). Residues 57-77 (VTIYMMNVALLDLVFILSLPF) form a helical membrane-spanning segment. The Extracellular segment spans residues 78–95 (RMFYYAKGEWPFGDYFCH). A disulfide bond links C94 and C172. The helical transmembrane segment at 96 to 116 (ILGALVVFYPSLALWLLALIS) threads the bilayer. Topologically, residues 117–138 (ADRYMAIVQPKYAKELKNTGKA) are cytoplasmic. A helical transmembrane segment spans residues 139-159 (VLACVGVWIMTLTTTVPLLLL). The Extracellular portion of the chain corresponds to 160 to 191 (DEDPDKASSPATCLKISDIIHLKAVNVLNFTR). N188 carries an N-linked (GlcNAc...) asparagine glycan. The helical transmembrane segment at 192–212 (LIFFFLIPLFIMIGCYVVIIH) threads the bilayer. Over 213 to 236 (SLLRGQTSKLKPKVKEKSIRIIVT) the chain is Cytoplasmic. The chain crosses the membrane as a helical span at residues 237–257 (LLLQVLACFVPFHICFALLML). Over 258–268 (QGEENSYSPWG) the chain is Extracellular. The helical transmembrane segment at 269-289 (AFTTFLMNLSTCLDVVLYYIV) threads the bilayer. Residues 290–331 (SKQFQARVISVMLYRNYLRSVRRKSVRSGSLRSLSNMNSEML) are Cytoplasmic-facing. S322 bears the Phosphoserine mark.

Belongs to the G-protein coupled receptor 1 family. In terms of tissue distribution, expressed in testis, spleen and brain (at protein level).

The protein resides in the cell membrane. Its subcellular location is the cytoplasmic vesicle membrane. Its function is as follows. G protein-coupled receptor (GPCR) that plays a role in diverse physiological processes particularly within the immune and nervous systems. Becomes active when triggered by various endogenous ligands including endocannabinoid N-arachidonyl glycine (NAGly), delta-9-tetrahydrocannabinol or resolvin D2/RvD2 derived from the omega-3 fatty acid docosahexaenoic acid (DHA). Upon RvD2 binding, facilitates the resolution of inflammation, aiding in tissue repair and homeostasis. Mechanistically, RvD2 ligation initiates Galphas protein coupling, activation of cAMP-PKA signaling pathway and phosphorylation of STAT3, leading to RvD2-stimulated macrophage phagocytosis. Mediates NAGly-induced process of reorganization of actin filaments and induction of acrosomal exocytosis. Activation by N-arachidonoyl glycine (NAGly) can also induce apoptosis in macrophages. Plays a role in homeostasis of CD8+ subsets of intraepithelial lymphocytes (IELs) (CD8alphaalpha and CD8alphabeta IELs) in small intestine by supporting preferential migration of CD8alphaalpha T-cells to intraepithelial compartment over lamina propria compartment, and by mediating their reconstitution into small intestine after bone marrow transplant. Participates also in hypotensive responses, mediating reduction in intraocular and blood pressure. This Rattus norvegicus (Rat) protein is N-arachidonyl glycine receptor.